A 228-amino-acid chain; its full sequence is Protein GrpE (228 aa).

Disordered regions lie at residues 1–31 (MADEKNKSQNPDLEQRDINNPRDREALNRAA) and 209–228 (GVSKGGPKATADNGASEGNG).

Belongs to the GrpE family. In terms of assembly, homodimer.

It localises to the cytoplasm. Functionally, participates actively in the response to hyperosmotic and heat shock by preventing the aggregation of stress-denatured proteins, in association with DnaK and GrpE. It is the nucleotide exchange factor for DnaK and may function as a thermosensor. Unfolded proteins bind initially to DnaJ; upon interaction with the DnaJ-bound protein, DnaK hydrolyzes its bound ATP, resulting in the formation of a stable complex. GrpE releases ADP from DnaK; ATP binding to DnaK triggers the release of the substrate protein, thus completing the reaction cycle. Several rounds of ATP-dependent interactions between DnaJ, DnaK and GrpE are required for fully efficient folding. In Brucella anthropi (strain ATCC 49188 / DSM 6882 / CCUG 24695 / JCM 21032 / LMG 3331 / NBRC 15819 / NCTC 12168 / Alc 37) (Ochrobactrum anthropi), this protein is Protein GrpE.